Reading from the N-terminus, the 89-residue chain is Putative defensin-like protein 89 (89 aa).

The signal sequence occupies residues 1-25 (MGFKNNLSLVSVMVFALILLPMISG). 4 disulfide bridges follow: Cys30-Cys66, Cys36-Cys57, Cys42-Cys64, and Cys46-Cys65.

The protein belongs to the DEFL family.

It is found in the secreted. In Arabidopsis thaliana (Mouse-ear cress), this protein is Putative defensin-like protein 89.